We begin with the raw amino-acid sequence, 499 residues long: MRVLVPPAERSQDTRVGAPAWREAAQAMARTAHILTDRCGQEAVTMWQPKDSVLDPNVAHHLGRAAYIQPWRFRVEMIKGGGTLEKPPPGEGVTLWKGKMKPPAWYARLPLPLHRKARALQTTEVVHAHARGARLTAARLGRAQHQINGRVRQLLRQREVTDHRLSEVRKGLLINQQSVKLRGYRPKSEKVPDKADSMLTWEKEELKSMKRKMERDMEKSEVLLKTLASCRDTLNFCFKERLQAVDLMNQPLDKVLEQARRHSWVNLSRAPTPRTQGQKTPPPDPVGTYNPACALALNEAKRLLVESKDTLVEMAKNEVDVREQQLQISDRVCASLAQKASETLELKERLNMTLGLMRGTILRCTKYNQELYTTHGLIKGPLSKVHLETAEKLDRPLVRMYQRHVGTQLPEAARLAQGTDKLQCHITYLEKNLDELLATHKNLSWGLNCKNIGHEVDGNVVRLRLRQRQPHVCYEQAQRLVKDWDPRTPPPRSKSSADP.

Coiled-coil stretches lie at residues 197-227 (SMLT…LKTL) and 297-317 (LNEA…MAKN). Tyr-372 bears the Phosphotyrosine mark.

As to quaternary structure, microtubule inner protein component of sperm flagellar doublet microtubules.

The protein localises to the cytoplasm. It is found in the cytoskeleton. It localises to the flagellum axoneme. Functionally, microtubule inner protein (MIP) part of the dynein-decorated doublet microtubules (DMTs) in sperm flagellar axoneme, which is required for motile flagellum beating. Forms an extensive interaction network cross-linking the lumen of axonemal doublet microtubules. This Homo sapiens (Human) protein is Tektin-like protein 1.